The primary structure comprises 344 residues: Arginine N-succinyltransferase (344 aa).

Leucine 125 contributes to the succinyl-CoA binding site. Catalysis depends on histidine 229, which acts as the Proton donor.

Belongs to the arginine N-succinyltransferase family.

The enzyme catalyses succinyl-CoA + L-arginine = N(2)-succinyl-L-arginine + CoA + H(+). The protein operates within amino-acid degradation; L-arginine degradation via AST pathway; L-glutamate and succinate from L-arginine: step 1/5. Catalyzes the transfer of succinyl-CoA to arginine to produce N(2)-succinylarginine. The protein is Arginine N-succinyltransferase of Escherichia coli (strain 55989 / EAEC).